The chain runs to 93 residues: Corticostatin 1 (93 aa).

The first 19 residues, 1–19 (MRTLILLAAILLAALQAQA), serve as a signal peptide directing secretion. The propeptide occupies 20–59 (ELFSVNVDEVLDQQQPGSDQDLVIHLTGEESSALQVPDTK). Intrachain disulfides connect cysteine 62–cysteine 90, cysteine 64–cysteine 79, and cysteine 69–cysteine 89.

This sequence belongs to the alpha-defensin family.

It localises to the secreted. Functionally, microbicidal activity and inhibits corticotropin (ACTH) stimulated corticosterone production. This Oryctolagus cuniculus (Rabbit) protein is Corticostatin 1.